Here is an 855-residue protein sequence, read N- to C-terminus: MVFTKSLLVLLWFLSCYTTTTSSALFNPPDNYLISCGSSQNITFQNRIFVPDSLHSSLVLKIGNSSVATSTTSNNSTNSIYQTARVFSSLASYRFKITSLGRHWIRLHFSPINNSTWNLTSASITVVTEDFVLLNNFSFNNFNGSYIFKEYTVNVTSEFLTLSFIPSNNSVVFVNAIEVVSVPDNLIPDQALALNPSTPFSGLSLLAFETVYRLNMGGPLLTSQNDTLGRQWDNDAEYLHVNSSVLVVTANPSSIKYSPSVTQETAPNMVYATADTMGDANVASPSFNVTWVLPVDPDFRYFVRVHFCDIVSQALNTLVFNLYVNDDLALGSLDLSTLTNGLKVPYFKDFISNGSVESSGVLTVSVGPDSQADITNATMNGLEVLKISNEAKSLSGVSSVKSLLPGGSGSKSKKKAVIIGSLVGAVTLILLIAVCCYCCLVASRKQRSTSPQEGGNGHPWLPLPLYGLSQTLTKSTASHKSATASCISLASTHLGRCFMFQEIMDATNKFDESSLLGVGGFGRVYKGTLEDGTKVAVKRGNPRSEQGMAEFRTEIEMLSKLRHRHLVSLIGYCDERSEMILVYEYMANGPLRSHLYGADLPPLSWKQRLEICIGAARGLHYLHTGASQSIIHRDVKTTNILLDENLVAKVADFGLSKTGPSLDQTHVSTAVKGSFGYLDPEYFRRQQLTEKSDVYSFGVVLMEVLCCRPALNPVLPREQVNIAEWAMAWQKKGLLDQIMDSNLTGKVNPASLKKFGETAEKCLAEYGVDRPSMGDVLWNLEYALQLEETSSALMEPDDNSTNHIPGIPMAPMEPFDNSMSIIDRGGVNSGTGTDDDAEDATTSAVFSQLVHPRGR.

An N-terminal signal peptide occupies residues 1–22; it reads MVFTKSLLVLLWFLSCYTTTTS. The Extracellular segment spans residues 23–415; sequence SALFNPPDNY…GGSGSKSKKK (393 aa). Residues N41, N64, N75, N114, N118, N136, N143, N154, N168, N225, N242, N288, N353, and N376 are each glycosylated (N-linked (GlcNAc...) asparagine). A helical transmembrane segment spans residues 416–436; sequence AVIIGSLVGAVTLILLIAVCC. Residues 437-855 lie on the Cytoplasmic side of the membrane; that stretch reads YCCLVASRKQ…FSQLVHPRGR (419 aa). The 274-residue stretch at 510–783 folds into the Protein kinase domain; the sequence is FDESSLLGVG…GDVLWNLEYA (274 aa). Residues 516 to 524 and K538 contribute to the ATP site; that span reads LGVGGFGRV. D634 serves as the catalytic Proton acceptor. Positions 822–855 are disordered; sequence IDRGGVNSGTGTDDDAEDATTSAVFSQLVHPRGR.

It belongs to the protein kinase superfamily. Ser/Thr protein kinase family. Autophosphorylated. Expressed in most vegetative tissues, including leaves, stems and roots, primarily in expanding cells and vascular tissue.

It localises to the cell membrane. In terms of biological role, receptor-like protein kinase required for cell elongation during vegetative growth, mostly in a brassinosteroid-(BR-) independent manner. Mediates the response of growing plant cells to the perturbation of cellulose synthesis and may act as a cell-wall-integrity sensor. Controls ectopic-lignin accumulation in cellulose-deficient mutant backgrounds. This Arabidopsis thaliana (Mouse-ear cress) protein is Receptor-like protein kinase THESEUS 1 (THE1).